A 356-amino-acid polypeptide reads, in one-letter code: Heat-inducible transcription repressor HrcA (356 aa).

It belongs to the HrcA family.

Functionally, negative regulator of class I heat shock genes (grpE-dnaK-dnaJ and groELS operons). Prevents heat-shock induction of these operons. In Bartonella tribocorum (strain CIP 105476 / IBS 506), this protein is Heat-inducible transcription repressor HrcA.